A 421-amino-acid polypeptide reads, in one-letter code: uncharacterized protein (421 aa).

This is an uncharacterized protein from Caenorhabditis elegans.